A 283-amino-acid polypeptide reads, in one-letter code: tRNA-cytidine(32) 2-sulfurtransferase (283 aa).

A PP-loop motif motif is present at residues 37-42; the sequence is SGGKDS. Residues Cys112, Cys115, and Cys203 each coordinate [4Fe-4S] cluster.

This sequence belongs to the TtcA family. As to quaternary structure, homodimer. Mg(2+) serves as cofactor. It depends on [4Fe-4S] cluster as a cofactor.

It localises to the cytoplasm. The enzyme catalyses cytidine(32) in tRNA + S-sulfanyl-L-cysteinyl-[cysteine desulfurase] + AH2 + ATP = 2-thiocytidine(32) in tRNA + L-cysteinyl-[cysteine desulfurase] + A + AMP + diphosphate + H(+). It participates in tRNA modification. Catalyzes the ATP-dependent 2-thiolation of cytidine in position 32 of tRNA, to form 2-thiocytidine (s(2)C32). The sulfur atoms are provided by the cysteine/cysteine desulfurase (IscS) system. In Legionella pneumophila (strain Corby), this protein is tRNA-cytidine(32) 2-sulfurtransferase.